A 775-amino-acid polypeptide reads, in one-letter code: Zinc finger protein GLIS3 (775 aa).

Disordered regions lie at residues 121–147 (TESSHSPYPSPRHSSTRSHSARSKKRA) and 282–314 (PGSTVDLPPAPPLPPLPPPPGPPPPYHAHAHLH). Positions 123 to 133 (SSHSPYPSPRH) are enriched in low complexity. Basic residues predominate over residues 134–147 (SSTRSHSARSKKRA). Over residues 289 to 307 (PPAPPLPPLPPPPGPPPPY) the composition is skewed to pro residues. The C2H2-type 1 zinc finger occupies 345–370 (HCCRWIDCSALYDQQEELVRHIEKVH). A C2H2-type 2; atypical zinc finger spans residues 379-406 (FTCFWAGCPRRYKPFNARYKLLIHMRVH). C2H2-type zinc fingers lie at residues 412-436 (NKCTFEGCEKAFSRLENLKIHLRSH), 442-466 (YLCQHPGCQKAFSNSSDRAKHQRTH), and 472-496 (YACQIPGCTKRYTDPSSLRKHVKAH). Disordered regions lie at residues 485 to 512 (DPSSLRKHVKAHSSKEQQARKKLRSSTE) and 529 to 665 (PATS…QPNG). Positions 491–507 (KHVKAHSSKEQQARKKL) match the Bipartite nuclear localization signal motif. The span at 497 to 512 (SSKEQQARKKLRSSTE) shows a compositional bias: basic and acidic residues. 3 stretches are compositionally biased toward polar residues: residues 557–567 (IFSSNYSSRSG), 588–600 (VQGSPHNPSSQLP), and 632–663 (SILQRTQPPYTQQPSGSHLKSYQPETNSSFQP).

Belongs to the GLI C2H2-type zinc-finger protein family. In terms of tissue distribution, in the adult, expressed at high levels in the kidney and at lower levels in the brain, skeletal muscle, pancreas, liver, lung, thymus and ovary.

Its subcellular location is the nucleus. Its function is as follows. Acts both as a repressor and an activator of transcription. Binds to the consensus sequence 5'-GACCACCCAC-3'. In Homo sapiens (Human), this protein is Zinc finger protein GLIS3 (GLIS3).